The primary structure comprises 585 residues: Acetolactate synthase large subunit (585 aa).

E60 contributes to the thiamine diphosphate binding site. Residues R162, 272-293 (HGTA…LGAR), and 315-334 (DIDP…IISD) contribute to the FAD site. Positions 407–486 (QHQMWAAQFL…IKIFIINNQW (80 aa)) are thiamine pyrophosphate binding. The Mg(2+) site is built by D457 and N484.

It belongs to the TPP enzyme family. As to quaternary structure, dimer of large and small chains. Requires Mg(2+) as cofactor. Thiamine diphosphate serves as cofactor.

The protein resides in the plastid. Its subcellular location is the chloroplast. The enzyme catalyses 2 pyruvate + H(+) = (2S)-2-acetolactate + CO2. It functions in the pathway amino-acid biosynthesis; L-isoleucine biosynthesis; L-isoleucine from 2-oxobutanoate: step 1/4. Its pathway is amino-acid biosynthesis; L-valine biosynthesis; L-valine from pyruvate: step 1/4. The polypeptide is Acetolactate synthase large subunit (ilvB) (Cyanidium caldarium (Red alga)).